Reading from the N-terminus, the 288-residue chain is 4-diphosphocytidyl-2-C-methyl-D-erythritol kinase (288 aa).

Lys-13 is a catalytic residue. 97 to 107 serves as a coordination point for ATP; sequence PMGGGIGGGSS. Residue Asp-139 is part of the active site.

This sequence belongs to the GHMP kinase family. IspE subfamily.

The enzyme catalyses 4-CDP-2-C-methyl-D-erythritol + ATP = 4-CDP-2-C-methyl-D-erythritol 2-phosphate + ADP + H(+). It functions in the pathway isoprenoid biosynthesis; isopentenyl diphosphate biosynthesis via DXP pathway; isopentenyl diphosphate from 1-deoxy-D-xylulose 5-phosphate: step 3/6. In terms of biological role, catalyzes the phosphorylation of the position 2 hydroxy group of 4-diphosphocytidyl-2C-methyl-D-erythritol. In Saccharophagus degradans (strain 2-40 / ATCC 43961 / DSM 17024), this protein is 4-diphosphocytidyl-2-C-methyl-D-erythritol kinase.